We begin with the raw amino-acid sequence, 887 residues long: Alanine--tRNA ligase (887 aa).

His-573, His-577, Cys-676, and His-680 together coordinate Zn(2+).

Belongs to the class-II aminoacyl-tRNA synthetase family. It depends on Zn(2+) as a cofactor.

The protein localises to the cytoplasm. The catalysed reaction is tRNA(Ala) + L-alanine + ATP = L-alanyl-tRNA(Ala) + AMP + diphosphate. Catalyzes the attachment of alanine to tRNA(Ala) in a two-step reaction: alanine is first activated by ATP to form Ala-AMP and then transferred to the acceptor end of tRNA(Ala). Also edits incorrectly charged Ser-tRNA(Ala) and Gly-tRNA(Ala) via its editing domain. The protein is Alanine--tRNA ligase of Corynebacterium jeikeium (strain K411).